The sequence spans 479 residues: Sulfate adenylyltransferase subunit 1 (479 aa).

The tr-type G domain maps to 25-239 (KSLLRFLTCG…EVLETVDIQR (215 aa)). The interval 34-41 (GSVDDGKS) is G1. 34–41 (GSVDDGKS) contacts GTP. Residues 92–96 (GITID) form a G2 region. Positions 113–116 (DTPG) are G3. Residues 113–117 (DTPGH) and 168–171 (NKMD) contribute to the GTP site. Residues 168-171 (NKMD) form a G4 region. The interval 206 to 208 (SAL) is G5.

This sequence belongs to the TRAFAC class translation factor GTPase superfamily. Classic translation factor GTPase family. CysN/NodQ subfamily. In terms of assembly, heterodimer composed of CysD, the smaller subunit, and CysN.

The catalysed reaction is sulfate + ATP + H(+) = adenosine 5'-phosphosulfate + diphosphate. The protein operates within sulfur metabolism; hydrogen sulfide biosynthesis; sulfite from sulfate: step 1/3. In terms of biological role, with CysD forms the ATP sulfurylase (ATPS) that catalyzes the adenylation of sulfate producing adenosine 5'-phosphosulfate (APS) and diphosphate, the first enzymatic step in sulfur assimilation pathway. APS synthesis involves the formation of a high-energy phosphoric-sulfuric acid anhydride bond driven by GTP hydrolysis by CysN coupled to ATP hydrolysis by CysD. The protein is Sulfate adenylyltransferase subunit 1 of Salmonella typhi.